The sequence spans 227 residues: Cytochrome c oxidase subunit 2 (227 aa).

Residues 1–14 (MAHPVQLGLQDATS) are Mitochondrial intermembrane-facing. The chain crosses the membrane as a helical span at residues 15–45 (PVMEELITFHDQALMAMFLISFLILYALSST). Residues 46–59 (LTTKLTNTNITDAQ) lie on the Mitochondrial matrix side of the membrane. Residues 60 to 87 (EMETIWTILPAVILILIALPSLRILYMT) form a helical membrane-spanning segment. The Mitochondrial intermembrane portion of the chain corresponds to 88–227 (DEINNPSFTI…IFEMGPVFTL (140 aa)). The Cu cation site is built by His161, Cys196, Glu198, Cys200, His204, and Met207. Glu198 contacts Mg(2+).

It belongs to the cytochrome c oxidase subunit 2 family. In terms of assembly, component of the cytochrome c oxidase (complex IV, CIV), a multisubunit enzyme composed of 14 subunits. The complex is composed of a catalytic core of 3 subunits MT-CO1, MT-CO2 and MT-CO3, encoded in the mitochondrial DNA, and 11 supernumerary subunits COX4I, COX5A, COX5B, COX6A, COX6B, COX6C, COX7A, COX7B, COX7C, COX8 and NDUFA4, which are encoded in the nuclear genome. The complex exists as a monomer or a dimer and forms supercomplexes (SCs) in the inner mitochondrial membrane with NADH-ubiquinone oxidoreductase (complex I, CI) and ubiquinol-cytochrome c oxidoreductase (cytochrome b-c1 complex, complex III, CIII), resulting in different assemblies (supercomplex SCI(1)III(2)IV(1) and megacomplex MCI(2)III(2)IV(2)). Found in a complex with TMEM177, COA6, COX18, COX20, SCO1 and SCO2. Interacts with TMEM177 in a COX20-dependent manner. Interacts with COX20. Interacts with COX16. It depends on Cu cation as a cofactor.

Its subcellular location is the mitochondrion inner membrane. It carries out the reaction 4 Fe(II)-[cytochrome c] + O2 + 8 H(+)(in) = 4 Fe(III)-[cytochrome c] + 2 H2O + 4 H(+)(out). Component of the cytochrome c oxidase, the last enzyme in the mitochondrial electron transport chain which drives oxidative phosphorylation. The respiratory chain contains 3 multisubunit complexes succinate dehydrogenase (complex II, CII), ubiquinol-cytochrome c oxidoreductase (cytochrome b-c1 complex, complex III, CIII) and cytochrome c oxidase (complex IV, CIV), that cooperate to transfer electrons derived from NADH and succinate to molecular oxygen, creating an electrochemical gradient over the inner membrane that drives transmembrane transport and the ATP synthase. Cytochrome c oxidase is the component of the respiratory chain that catalyzes the reduction of oxygen to water. Electrons originating from reduced cytochrome c in the intermembrane space (IMS) are transferred via the dinuclear copper A center (CU(A)) of subunit 2 and heme A of subunit 1 to the active site in subunit 1, a binuclear center (BNC) formed by heme A3 and copper B (CU(B)). The BNC reduces molecular oxygen to 2 water molecules using 4 electrons from cytochrome c in the IMS and 4 protons from the mitochondrial matrix. This is Cytochrome c oxidase subunit 2 (MT-CO2) from Papio anubis (Olive baboon).